The chain runs to 622 residues: Glutamyl-tRNA(Gln) amidotransferase subunit E (622 aa).

The protein belongs to the GatB/GatE family. GatE subfamily. Heterodimer of GatD and GatE.

The catalysed reaction is L-glutamyl-tRNA(Gln) + L-glutamine + ATP + H2O = L-glutaminyl-tRNA(Gln) + L-glutamate + ADP + phosphate + H(+). Functionally, allows the formation of correctly charged Gln-tRNA(Gln) through the transamidation of misacylated Glu-tRNA(Gln) in organisms which lack glutaminyl-tRNA synthetase. The reaction takes place in the presence of glutamine and ATP through an activated gamma-phospho-Glu-tRNA(Gln). The GatDE system is specific for glutamate and does not act on aspartate. This is Glutamyl-tRNA(Gln) amidotransferase subunit E from Halobacterium salinarum (strain ATCC 29341 / DSM 671 / R1).